Consider the following 327-residue polypeptide: Urease accessory protein 4 (327 aa).

Residue asparagine 120 is glycosylated (N-linked (GlcNAc...) asparagine). Residues 239–259 (VYATVLIIGPHLTTLFSYLAY) form a helical membrane-spanning segment.

The protein belongs to the UreD family. As to quaternary structure, URE4, URE6 and URE7 may form a complex that acts as a GTP-hydrolysis-dependent molecular chaperone, activating the urease apoprotein URE1.

It is found in the membrane. Its function is as follows. Urease accessory protein required for the maturation and activation of urease via the functional incorporation of the urease nickel metallocenter. Plays a role in host brain invasion. The protein is Urease accessory protein 4 of Cryptococcus neoformans var. grubii serotype A (strain H99 / ATCC 208821 / CBS 10515 / FGSC 9487) (Filobasidiella neoformans var. grubii).